The following is a 211-amino-acid chain: MEQRLLNANERSTYGKNAAVKMRKAGRIPAVMYDRHGKSVPIDVDEREFMKLFKLVTESTIVTLNAAGKDYEVFIKDFQHDIVSDKIKHIDFYEVERGKTLRTKVKIRLEGSPEGVRHGGILETGITELELECLPKDLPARIIVDVSALDVNQSLHVRDIKLPEAVTVLTSDDITVAAIKFAAAESTTPAATEGEETEAAAAAPEPAAEDK.

The interval Glu-185–Lys-211 is disordered. Positions Ala-199–Lys-211 are enriched in low complexity.

It belongs to the bacterial ribosomal protein bL25 family. CTC subfamily. Part of the 50S ribosomal subunit; part of the 5S rRNA/L5/L18/L25 subcomplex. Contacts the 5S rRNA. Binds to the 5S rRNA independently of L5 and L18.

In terms of biological role, this is one of the proteins that binds to the 5S RNA in the ribosome where it forms part of the central protuberance. The chain is Large ribosomal subunit protein bL25 from Treponema denticola (strain ATCC 35405 / DSM 14222 / CIP 103919 / JCM 8153 / KCTC 15104).